We begin with the raw amino-acid sequence, 102 residues long: PE family immunomodulator PE15 (102 aa).

The PE domain occupies 3–91; sequence LRVVPESLAG…SGASYAARDA (89 aa).

This sequence belongs to the mycobacterial PE family.

Its subcellular location is the secreted. It is found in the cell envelope. It localises to the cell surface. May play a pivotal role in the evasion of host immune response by M.tuberculosis. Mediates production of IL-10 via activation of the p38 and ERK1/2 mitogen-activated protein kinase (MAPK) signaling pathways. The polypeptide is PE family immunomodulator PE15 (PE15) (Mycobacterium tuberculosis (strain CDC 1551 / Oshkosh)).